The sequence spans 294 residues: MTNSNKVLKLGLPKGSLQDSTLDLFAHAGFHFSVQSRSYFPSIDDDELEAILIRAQEMAHYVQLGAFDVGLTGKDWIIETDADVVEVADLVYSKASMRPVRWVLAVPESSPVKTVKDLEGKHIATEVVNITKKYLAANGVNASVEFSWGATEVKPPDLADAIVEVTETGSSLRANKLRIVETILESNTKLIANRQSWEDPWKREKIESMALLLQGAINAQGKVGLKMNAPKSALEKITSIIPALRQPTVSHLANDQWVALEVIVTEKIVRKLIPELKRAGAEGIFEYDINKLID.

Belongs to the ATP phosphoribosyltransferase family. Long subfamily. The cofactor is Mg(2+).

It is found in the cytoplasm. It catalyses the reaction 1-(5-phospho-beta-D-ribosyl)-ATP + diphosphate = 5-phospho-alpha-D-ribose 1-diphosphate + ATP. It functions in the pathway amino-acid biosynthesis; L-histidine biosynthesis; L-histidine from 5-phospho-alpha-D-ribose 1-diphosphate: step 1/9. Its activity is regulated as follows. Feedback inhibited by histidine. Its function is as follows. Catalyzes the condensation of ATP and 5-phosphoribose 1-diphosphate to form N'-(5'-phosphoribosyl)-ATP (PR-ATP). Has a crucial role in the pathway because the rate of histidine biosynthesis seems to be controlled primarily by regulation of HisG enzymatic activity. The protein is ATP phosphoribosyltransferase of Chlorobium luteolum (strain DSM 273 / BCRC 81028 / 2530) (Pelodictyon luteolum).